The chain runs to 185 residues: Elongation factor P (185 aa).

It belongs to the elongation factor P family.

Its subcellular location is the cytoplasm. The protein operates within protein biosynthesis; polypeptide chain elongation. Functionally, involved in peptide bond synthesis. Stimulates efficient translation and peptide-bond synthesis on native or reconstituted 70S ribosomes in vitro. Probably functions indirectly by altering the affinity of the ribosome for aminoacyl-tRNA, thus increasing their reactivity as acceptors for peptidyl transferase. This Oceanobacillus iheyensis (strain DSM 14371 / CIP 107618 / JCM 11309 / KCTC 3954 / HTE831) protein is Elongation factor P.